Reading from the N-terminus, the 84-residue chain is RNA-binding protein Hfq (84 aa).

Positions 10–70 constitute a Sm domain; it reads DNVLNQVRKN…VSTIIPGKTL (61 aa).

It belongs to the Hfq family. As to quaternary structure, homohexamer.

Its function is as follows. RNA chaperone that binds small regulatory RNA (sRNAs) and mRNAs to facilitate mRNA translational regulation in response to envelope stress, environmental stress and changes in metabolite concentrations. Also binds with high specificity to tRNAs. The sequence is that of RNA-binding protein Hfq from Natranaerobius thermophilus (strain ATCC BAA-1301 / DSM 18059 / JW/NM-WN-LF).